The chain runs to 408 residues: UPF0761 membrane protein Avin_36810 (408 aa).

6 consecutive transmembrane segments (helical) span residues 33 to 53 (YTAL…LSVV), 92 to 112 (HLTW…LMTV), 132 to 152 (FLLH…GFAL), 174 to 194 (LLKV…YVAV), 209 to 229 (LFAA…VALF), and 238 to 258 (AFAA…IVLL).

The protein belongs to the UPF0761 family.

The protein localises to the cell inner membrane. The chain is UPF0761 membrane protein Avin_36810 from Azotobacter vinelandii (strain DJ / ATCC BAA-1303).